A 415-amino-acid polypeptide reads, in one-letter code: MKHLPVQDKQVFNAIKDERKRQQTKIELIASENFVTEAVMEAQGSVLTNKYAEGYPGKRYYGGCEHVDVVEDIARDRAKEIFGAEHVNVQPHSGAQANMAVYFTILEHGDTVLGMNLSHGGHLTHGSPVNFSGVQYNFVEYGVDKDTQYIDYEDVREKALAHKPKLIVAGASAYPRTIDFKKFREIADEVGAYFMVDMAHIAGLVAAGLHPNPVPYADFVTTTTHKTLRGPRGGMILCREEFGKKIDKSIFPGIQGGPLMHVIAAKAVSFGEVLEDDFKTYAQNVISNAKSLAESLNKEGIQLVSGGTDNHLVLVDLRSLGLTGKVAEHVLDEIGITSNKNAIPYDPEKPFVTSGIRLGTAAVTSRGFDGDALEEVGAIIGLALKHHEDEAKLEEARQRVSALTEKFPLYKELGY.

Residues Leu-117 and 121-123 each bind (6S)-5,6,7,8-tetrahydrofolate; that span reads GHL. Lys-226 carries the post-translational modification N6-(pyridoxal phosphate)lysine. Residue Glu-241 participates in (6S)-5,6,7,8-tetrahydrofolate binding.

This sequence belongs to the SHMT family. As to quaternary structure, homodimer. Pyridoxal 5'-phosphate is required as a cofactor.

It is found in the cytoplasm. The catalysed reaction is (6R)-5,10-methylene-5,6,7,8-tetrahydrofolate + glycine + H2O = (6S)-5,6,7,8-tetrahydrofolate + L-serine. It functions in the pathway one-carbon metabolism; tetrahydrofolate interconversion. Its pathway is amino-acid biosynthesis; glycine biosynthesis; glycine from L-serine: step 1/1. Its function is as follows. Catalyzes the reversible interconversion of serine and glycine with tetrahydrofolate (THF) serving as the one-carbon carrier. This reaction serves as the major source of one-carbon groups required for the biosynthesis of purines, thymidylate, methionine, and other important biomolecules. Also exhibits THF-independent aldolase activity toward beta-hydroxyamino acids, producing glycine and aldehydes, via a retro-aldol mechanism. The protein is Serine hydroxymethyltransferase of Bacillus velezensis (strain DSM 23117 / BGSC 10A6 / LMG 26770 / FZB42) (Bacillus amyloliquefaciens subsp. plantarum).